The primary structure comprises 460 residues: Ammonium transporter Rh type C (460 aa).

Topologically, residues 1–9 are cytoplasmic; it reads MAWNTNLRW. The chain crosses the membrane as a helical span at residues 10–30; that stretch reads RLPLTCLLLQVIMVILFGVFV. Residues 31-61 are Extracellular-facing; that stretch reads RYDPDADAHWIDERLGRNISSDMDNEFYYRY. Asn48 carries N-linked (GlcNAc...) asparagine glycosylation. A helical transmembrane segment spans residues 62-82; the sequence is PSFQDVHVMIFVGFGFLMTFL. The Cytoplasmic portion of the chain corresponds to 83 to 86; that stretch reads QRYG. Residues 87–107 form a helical membrane-spanning segment; the sequence is FSSVGFNFLLAAFGIQWALLM. Residues 108–125 are Extracellular-facing; that stretch reads QGWLHSFHSGYIVLGVEN. A helical transmembrane segment spans residues 126 to 145; the sequence is LINADFCVGSVCVAFGAVLG. Residues 146–151 are Cytoplasmic-facing; it reads KVSPVQ. A helical transmembrane segment spans residues 152-174; sequence LLIMTLFQVTLFSVNEFILLNLL. Over 175 to 179 the chain is Extracellular; it reads EVKDA. Residues 180–200 form a helical membrane-spanning segment; that stretch reads GGSMTIHTFGAYFGLTVTWIL. Residues 201–219 are Cytoplasmic-facing; that stretch reads YRPNLYQSKERQSSVYHSD. Residues 220-240 form a helical membrane-spanning segment; it reads LFAMIGTLFLWMYWPSFNSAV. Residues 241-251 are Extracellular-facing; the sequence is SHHGDAQHRAA. The chain crosses the membrane as a helical span at residues 252–272; that stretch reads INTYCSLAACVLTSVALSSAL. The Cytoplasmic segment spans residues 273 to 285; sequence HKKGKLDMVHIQN. Residues 286-306 traverse the membrane as a helical segment; that stretch reads ATLAGGVAVGTAAEMMLMPYG. Position 307 (Ser307) is a topological domain, extracellular. A helical transmembrane segment spans residues 308-328; that stretch reads LIVGFICGIISTLGFVYLTPF. The Cytoplasmic segment spans residues 329 to 340; that stretch reads LESRLRIQDTCG. Residues 341–361 traverse the membrane as a helical segment; that stretch reads IHNLHGMPGIIGGIVGAVTAA. The Extracellular portion of the chain corresponds to 362 to 396; it reads SANTQQYGQKGLAHAFDIDATKTTWTASMQGSFQA. The helical transmembrane segment at 397–417 threads the bilayer; that stretch reads AGLFVSLAMALVGGLIVGVIL. Over 418-460 the chain is Cytoplasmic; sequence KLPFWGQPADENCFEDAIYWEIPEDQKSLVSRSEDPTLRPTEP.

The protein belongs to the ammonium transporter (TC 2.A.49) family. Rh subfamily. Homotrimer. N-glycosylated.

It localises to the cell membrane. It is found in the apical cell membrane. The catalysed reaction is NH4(+)(in) = NH4(+)(out). It carries out the reaction methylamine(out) = methylamine(in). It catalyses the reaction CO2(out) = CO2(in). Ammonium transporter involved in the maintenance of acid-base homeostasis. Transports ammonium and its related derivative methylammonium across the plasma membrane of epithelial cells likely contributing to renal transepithelial ammonia transport and ammonia metabolism. Postulated to primarily mediate an electroneutral bidirectional transport of NH3 ammonia species according to a mechanism that implies interaction of an NH4(+) ion with acidic residues of the pore entry followed by dissociation of NH4(+) into NH3 and H(+). As a result NH3 transits through the central pore and is protonated on the extracellular side reforming NH4(+). May act as a CO2 channel providing for renal acid secretion. This chain is Ammonium transporter Rh type C (RHCG), found in Sus scrofa (Pig).